A 133-amino-acid chain; its full sequence is Small ribosomal subunit protein uS8 (133 aa).

It belongs to the universal ribosomal protein uS8 family. In terms of assembly, part of the 30S ribosomal subunit. Contacts proteins S5 and S12.

One of the primary rRNA binding proteins, it binds directly to 16S rRNA central domain where it helps coordinate assembly of the platform of the 30S subunit. In Deinococcus deserti (strain DSM 17065 / CIP 109153 / LMG 22923 / VCD115), this protein is Small ribosomal subunit protein uS8.